The sequence spans 316 residues: Phosphate acyltransferase (316 aa).

The protein belongs to the PlsX family. As to quaternary structure, homodimer. Probably interacts with PlsY.

Its subcellular location is the cytoplasm. It catalyses the reaction a fatty acyl-[ACP] + phosphate = an acyl phosphate + holo-[ACP]. It participates in lipid metabolism; phospholipid metabolism. Functionally, catalyzes the reversible formation of acyl-phosphate (acyl-PO(4)) from acyl-[acyl-carrier-protein] (acyl-ACP). This enzyme utilizes acyl-ACP as fatty acyl donor, but not acyl-CoA. The polypeptide is Phosphate acyltransferase (Chlamydia felis (strain Fe/C-56) (Chlamydophila felis)).